Here is a 711-residue protein sequence, read N- to C-terminus: Putative membrane protein IgaA homolog (711 aa).

Met-1 is a topological domain (periplasmic). A helical membrane pass occupies residues 2–22 (STIVIFLAALLACSLLAGWLI). At 23–204 (KVRSRRRQLP…YALSRPRGLR (182 aa)) the chain is on the cytoplasmic side. A run of 2 helical transmembrane segments spans residues 205 to 225 (EALL…TPDV) and 226 to 246 (FVPW…WGLF). The Cytoplasmic portion of the chain corresponds to 247–339 (APPAKSSLRE…KNFPLQHWLR (93 aa)). The chain crosses the membrane as a helical span at residues 340 to 360 (STIIAAGSLLVLFMLLFWIPL). At 361–655 (DMPLKFTLSW…IPDRSGLWRY (295 aa)) the chain is on the periplasmic side. The chain crosses the membrane as a helical span at residues 656 to 676 (LSTTLLLLTMLGSAIYNGVQA). Topologically, residues 677 to 711 (WRRYQRHRTRMMKIQAYYESCLNPQLITPSESLIE) are cytoplasmic.

Belongs to the IgaA family.

The protein localises to the cell inner membrane. The sequence is that of Putative membrane protein IgaA homolog (yrfF) from Escherichia coli O157:H7.